The following is a 525-amino-acid chain: Nucleolar and spindle-associated protein 1-C (525 aa).

4 disordered regions span residues 43-203 (FYPE…KKLH), 250-293 (TPVS…FSAA), 373-398 (TPESEPKQMLPSVKKNEPMTTPEKAK), and 452-525 (LSRP…VPVQ). Over residues 58-69 (SSLTDTDELNSS) the composition is skewed to polar residues. Over residues 82–92 (THRRGRGRKPL) the composition is skewed to basic residues. A compositionally biased stretch (basic and acidic residues) spans 93-102 (KNHDTPKDEF). Polar residues predominate over residues 113–127 (SLASETDNTQHQNCL). The segment covering 160 to 169 (TTEKRQKKAS) has biased composition (basic and acidic residues). The segment covering 270 to 285 (PPTTGASPSRTPTNQR) has biased composition (polar residues). The segment covering 476 to 494 (CGSNNNVSVLKNNFKQPHL) has biased composition (polar residues). The segment covering 495–514 (QTREDRRKQHEQDRKGKRDQ) has biased composition (basic and acidic residues).

The protein belongs to the NUSAP family. Interacts with DNA, microtubules, ipo7, kpna2 and kpnb1. Microtubule stabilization is inhibited by ipo7 and kpna2, while microtubule bundling is inhibited by kpnb1. Active GTP-bound ran causes dissociation of ipo7 and kpnb1.

It is found in the cytoplasm. The protein localises to the nucleus. Its subcellular location is the cytoskeleton. It localises to the spindle. In terms of biological role, microtubule-associated protein with the capacity to bundle and stabilize microtubules. May associate with chromosomes and promote the organization of meiotic or mitotic spindle microtubules around them. This chain is Nucleolar and spindle-associated protein 1-C (nusap1-c), found in Xenopus laevis (African clawed frog).